Here is a 437-residue protein sequence, read N- to C-terminus: Tol-Pal system protein TolB (437 aa).

An N-terminal signal peptide occupies residues 1-30 (MLPTPSRSHKLSGYAAVLFFLWLVCSPAQA). Polar residues predominate over residues 410-423 (SDGRTRQQLSTQTG). The tract at residues 410 to 437 (SDGRTRQQLSTQTGDIREPAWGPLRRLQ) is disordered.

This sequence belongs to the TolB family. As to quaternary structure, the Tol-Pal system is composed of five core proteins: the inner membrane proteins TolA, TolQ and TolR, the periplasmic protein TolB and the outer membrane protein Pal. They form a network linking the inner and outer membranes and the peptidoglycan layer.

The protein resides in the periplasm. Part of the Tol-Pal system, which plays a role in outer membrane invagination during cell division and is important for maintaining outer membrane integrity. The sequence is that of Tol-Pal system protein TolB from Nitrosospira multiformis (strain ATCC 25196 / NCIMB 11849 / C 71).